Reading from the N-terminus, the 90-residue chain is Small ribosomal subunit protein uS15 (90 aa).

It belongs to the universal ribosomal protein uS15 family. As to quaternary structure, part of the 30S ribosomal subunit. Forms a bridge to the 50S subunit in the 70S ribosome, contacting the 23S rRNA.

Its function is as follows. One of the primary rRNA binding proteins, it binds directly to 16S rRNA where it helps nucleate assembly of the platform of the 30S subunit by binding and bridging several RNA helices of the 16S rRNA. Forms an intersubunit bridge (bridge B4) with the 23S rRNA of the 50S subunit in the ribosome. This chain is Small ribosomal subunit protein uS15, found in Campylobacter lari (strain RM2100 / D67 / ATCC BAA-1060).